The following is a 592-amino-acid chain: MKNEIQDGLGSALILVAKNHGIDIRLLDQAIEIERCKDPENGDFASNIALKYAKVFKMKPRQLADELVVSVPLMDSVAGMEVAGPGFINIRLSRESITAVLENVVAKKERYGCFENPNARKILVEFVSANPTGPLHVGHGRGAAYGDSLSRLLIANGHQVDREYYINDFGRQMDILALSVYWRYVQECGIGVALPKGIYQGDYVIDIAKKLKEKEGKRLAYPVNEWAPDYPQTWTQEQVDNGDRDRWIDGAIAGLKEKLGQKEYRGVFDLALSMELDDIRGDLEEFGVFFDRWFSERSMSENDMINNALKKVDEAGYLYEKDGAVWFKSTAFGDEKDRVVRRKNGMTTYFSSDISYHFDKYNRGYDQMIDILGADHHGYMARVRASLAALGLDPEKLVIALVQFAVLYKGGEKMQMSTRSGEFVTLRDLREHVGADAARFFYVMRKPEQHLDFDLDLAESNSKDNPFYYVEYAHARCCGMLNKAEEEGYEFSPEAALKCRNALVEPEETALISELHRYPEVVIAAGKQMAPHQVIIYLKELATRWHHYYDVGHKVLHEDEEIRNARLLLTWAVRQVLRNALAIIGVQARERM.

A 'HIGH' region motif is present at residues 129 to 139 (ANPTGPLHVGH).

It belongs to the class-I aminoacyl-tRNA synthetase family. Monomer.

Its subcellular location is the cytoplasm. It carries out the reaction tRNA(Arg) + L-arginine + ATP = L-arginyl-tRNA(Arg) + AMP + diphosphate. The sequence is that of Arginine--tRNA ligase from Dichelobacter nodosus (strain VCS1703A).